The chain runs to 290 residues: PIH1 domain-containing protein 1 (290 aa).

Residues Ser12 and Ser173 each carry the phosphoserine modification.

Belongs to the PIH1 family. In terms of assembly, component of the R2TP complex composed at least of RUVBL1, RUVBL2, RPAP3 and PIHD1. Component of the PAQosome complex which is responsible for the biogenesis of several protein complexes and which consists of R2TP complex members RUVBL1, RUVBL2, RPAP3 and PIH1D1, URI complex members PFDN2, PFDN6, PDRG1, UXT and URI1 as well as ASDURF, POLR2E and DNAAF10/WDR92. Interacts with phosphorylated TELO2 and mediates interaction of TELO2 with the R2TP complex. Interacts with phosphorylated ECD, EFTUD2/SNRP116, RPB1 and UBR5 and with RPB1 in a phosphorylation-independent manner. Interacts with the core C/D box snoRNP particle components NOP58 and FBL and with RUVBL1/TIP49. Interacts with RPAP3 and DNAAF10. Interacts with histone H4 and with SWI/SNF complex member SMARCB1/SNF5. Interacts with the mTORC1 complex member RPTOR. Interacts with MSL1. In terms of tissue distribution, expressed at low levels in normal mammary epithelial cells (at protein level). Highest expression in lung, leukocyte and placenta. Expressed at lower levels in brain, prostate, colon, heart, small intestine, liver, ovary, pancreas, skeletal muscle, spleen, testis and thymus.

The protein localises to the nucleus. Involved in the assembly of C/D box small nucleolar ribonucleoprotein (snoRNP) particles. Recruits the SWI/SNF complex to the core promoter of rRNA genes and enhances pre-rRNA transcription. Mediates interaction of TELO2 with the R2TP complex which is necessary for the stability of MTOR and SMG1. Positively regulates the assembly and activity of the mTORC1 complex. In Homo sapiens (Human), this protein is PIH1 domain-containing protein 1 (PIH1D1).